We begin with the raw amino-acid sequence, 145 residues long: Putative pre-16S rRNA nuclease (145 aa).

It belongs to the YqgF nuclease family.

The protein resides in the cytoplasm. In terms of biological role, could be a nuclease involved in processing of the 5'-end of pre-16S rRNA. The chain is Putative pre-16S rRNA nuclease from Tropheryma whipplei (strain Twist) (Whipple's bacillus).